The following is a 221-amino-acid chain: Small ribosomal subunit protein uS2 (221 aa).

The protein belongs to the universal ribosomal protein uS2 family.

This Methanococcus maripaludis (strain C6 / ATCC BAA-1332) protein is Small ribosomal subunit protein uS2.